The primary structure comprises 180 residues: Ribosome-recycling factor (180 aa).

Belongs to the RRF family.

It is found in the cytoplasm. Functionally, responsible for the release of ribosomes from messenger RNA at the termination of protein biosynthesis. May increase the efficiency of translation by recycling ribosomes from one round of translation to another. This Chlamydia caviae (strain ATCC VR-813 / DSM 19441 / 03DC25 / GPIC) (Chlamydophila caviae) protein is Ribosome-recycling factor.